The chain runs to 650 residues: DNA mismatch repair protein MutL (650 aa).

The segment at Ser374–Asn420 is disordered. Over residues Gly392–Asn420 the composition is skewed to polar residues.

It belongs to the DNA mismatch repair MutL/HexB family.

Its function is as follows. This protein is involved in the repair of mismatches in DNA. It is required for dam-dependent methyl-directed DNA mismatch repair. May act as a 'molecular matchmaker', a protein that promotes the formation of a stable complex between two or more DNA-binding proteins in an ATP-dependent manner without itself being part of a final effector complex. The sequence is that of DNA mismatch repair protein MutL from Shewanella amazonensis (strain ATCC BAA-1098 / SB2B).